Here is a 444-residue protein sequence, read N- to C-terminus: Ribulose bisphosphate carboxylase (444 aa).

Residue K163 is the Proton acceptor of the active site. K165 is a binding site for substrate. 3 residues coordinate Mg(2+): K189, D191, and E192. K189 carries the N6-carboxylysine modification. H281 acts as the Proton acceptor in catalysis. Substrate contacts are provided by residues R282, H314, 367-369, and 389-392; these read SGG and QLGG.

Belongs to the RuBisCO large chain family. Type III subfamily. In terms of assembly, homodimer or homodecamer. In contrast to form I RuBisCO, the form III RuBisCO is composed solely of large subunits. Mg(2+) serves as cofactor.

The catalysed reaction is 2 (2R)-3-phosphoglycerate + 2 H(+) = D-ribulose 1,5-bisphosphate + CO2 + H2O. The enzyme catalyses D-ribulose 1,5-bisphosphate + O2 = 2-phosphoglycolate + (2R)-3-phosphoglycerate + 2 H(+). Catalyzes the addition of molecular CO(2) and H(2)O to ribulose 1,5-bisphosphate (RuBP), generating two molecules of 3-phosphoglycerate (3-PGA). Functions in an archaeal AMP degradation pathway, together with AMP phosphorylase and R15P isomerase. This is Ribulose bisphosphate carboxylase from Thermococcus onnurineus (strain NA1).